Here is a 220-residue protein sequence, read N- to C-terminus: Claudin-22 (220 aa).

Over 1–10 (MGLVFRTATQ) the chain is Cytoplasmic. The chain crosses the membrane as a helical span at residues 11 to 31 (AAALLLSLLGWVLSCLTNYLP). Residues 32–81 (HWKNLNLELNEMENWTMGLWKSCVIQEEVGRQCKDFDSFLALPAELQVSR) lie on the Extracellular side of the membrane. The chain crosses the membrane as a helical span at residues 82 to 102 (VLMSLCNGLGLLGLLASGCGL). The Cytoplasmic segment spans residues 103 to 120 (DCLRLGETQEGLKKRLLT). Residues 121 to 141 (LGGTLLWTSGVMVLVPVSWVA) traverse the membrane as a helical segment. Residues 142-164 (HKTVREFWDETMPEIVPRWEFGE) lie on the Extracellular side of the membrane. A helical transmembrane segment spans residues 165 to 185 (ALFLGWFAGFCLVLGGCVLHC). At 186 to 220 (AACWSPAPAASSHYAVAGPRDHQQHLELKQANPEI) the chain is on the cytoplasmic side.

The protein belongs to the claudin family.

The protein resides in the cell junction. The protein localises to the tight junction. It localises to the cell membrane. Plays a major role in tight junction-specific obliteration of the intercellular space, through calcium-independent cell-adhesion activity. This is Claudin-22 (Cldn22) from Mus musculus (Mouse).